Reading from the N-terminus, the 126-residue chain is uncharacterized protein (126 aa).

Positions 1–27 (MKNLFIFLSLMMMFVLTACGGSKYDDA) are cleaved as a signal peptide. The disordered stretch occupies residues 93-126 (MTDMPGNGENDRLGLSKKTPDYEEVKGEETELEE). The span at 101 to 126 (ENDRLGLSKKTPDYEEVKGEETELEE) shows a compositional bias: basic and acidic residues.

This is an uncharacterized protein from Bacillus subtilis (strain 168).